Here is a 372-residue protein sequence, read N- to C-terminus: Tyrosine--tRNA ligase 1 (372 aa).

The L-tyrosine site is built by tyrosine 37, tyrosine 169, glutamine 173, aspartate 176, and glutamine 191. A 'KMSKS' region motif is present at residues 246–250; the sequence is KMSKS. Lysine 249 contributes to the ATP binding site.

It belongs to the class-I aminoacyl-tRNA synthetase family. TyrS type 4 subfamily. Homodimer.

The protein localises to the cytoplasm. It catalyses the reaction tRNA(Tyr) + L-tyrosine + ATP = L-tyrosyl-tRNA(Tyr) + AMP + diphosphate + H(+). Functionally, catalyzes the attachment of tyrosine to tRNA(Tyr) in a two-step reaction: tyrosine is first activated by ATP to form Tyr-AMP and then transferred to the acceptor end of tRNA(Tyr). The polypeptide is Tyrosine--tRNA ligase 1 (Pyrobaculum aerophilum (strain ATCC 51768 / DSM 7523 / JCM 9630 / CIP 104966 / NBRC 100827 / IM2)).